The following is a 678-amino-acid chain: Oviduct-specific glycoprotein (678 aa).

The signal sequence occupies residues 1–21; sequence MWKLLLWVGLVLVLKHHDGAA. The region spanning 22-385 is the GH18 domain; that stretch reads HKLVCYFTNW…YVLNDILVRA (364 aa). Cysteines 26 and 51 form a disulfide. Chitin is bound by residues 71-72, 98-101, Tyr142, 211-214, and Trp355; these read LQ, GGWN, and LSYD. N-linked (GlcNAc...) asparagine glycans are attached at residues Asn402 and Asn441. The tract at residues 524-544 is disordered; the sequence is LTPVGHQSVTPVSHQSVSPGG. Polar residues predominate over residues 528-544; it reads GHQSVTPVSHQSVSPGG. N-linked (GlcNAc...) asparagine glycosylation is found at Asn580, Asn596, and Asn648. A disordered region spans residues 581 to 606; that stretch reads ISVTPEGQTMPLRGENLTSEVGTHPR. Residues 651–662 are compositionally biased toward polar residues; it reads SVNSVTPQTSPL. Residues 651 to 678 are disordered; sequence SVNSVTPQTSPLSLKKEIPENSAVDEEA.

The protein belongs to the glycosyl hydrolase 18 family. Oviduct.

The protein resides in the cytoplasmic vesicle. The protein localises to the secretory vesicle. In terms of biological role, binds to oocyte zona pellucida in vivo. May play a role in the fertilization process and/or early embryonic development. This Homo sapiens (Human) protein is Oviduct-specific glycoprotein (OVGP1).